Consider the following 146-residue polypeptide: Flagellar assembly factor FliW (146 aa).

It belongs to the FliW family. Interacts with translational regulator CsrA and flagellin(s).

The protein localises to the cytoplasm. Acts as an anti-CsrA protein, binds CsrA and prevents it from repressing translation of its target genes, one of which is flagellin. Binds to flagellin and participates in the assembly of the flagellum. In Azoarcus sp. (strain BH72), this protein is Flagellar assembly factor FliW.